The chain runs to 87 residues: HssA/B-like protein 8 (87 aa).

Residues 1-22 are compositionally biased toward polar residues; sequence MSILSALTSISNPMKSTKSSVA. The disordered stretch occupies residues 1 to 24; the sequence is MSILSALTSISNPMKSTKSSVANG.

Belongs to the hssA/B family.

The polypeptide is HssA/B-like protein 8 (hssl8) (Dictyostelium discoideum (Social amoeba)).